Here is a 554-residue protein sequence, read N- to C-terminus: ATP-dependent RNA helicase MRH4, mitochondrial (554 aa).

Residues 1–54 (MSSVGIASASLWLRGPVKSALKGRWLSCEQMRRYGTKSAPAVRKGGHSKKARQA) constitute a mitochondrion transit peptide. The Q motif signature appears at 119 to 140 (DCGLDDKRVAAFLGQVQPTPIQ). In terms of domain architecture, Helicase ATP-binding spans 150 to 337 (TLMEPQLQVH…NKLFPNLQVV (188 aa)). 163-170 (AETGSGKT) is an ATP binding site. The DEAD box signature appears at 285–288 (DEAD). A Helicase C-terminal domain is found at 368 to 554 (ALAQALYAIM…PVVKKNRPIQ (187 aa)). The interval 439-474 (RIQDQVRPSELKKPQERRLPNSNIKVADSKDNGQRS) is disordered. Basic and acidic residues predominate over residues 445–457 (RPSELKKPQERRL).

Belongs to the DEAD box helicase family. MRH4 subfamily.

Its subcellular location is the mitochondrion. It carries out the reaction ATP + H2O = ADP + phosphate + H(+). Its function is as follows. ATP-binding RNA helicase involved in mitochondrial RNA metabolism. Required for maintenance of mitochondrial DNA. The protein is ATP-dependent RNA helicase MRH4, mitochondrial (MRH4) of Eremothecium gossypii (strain ATCC 10895 / CBS 109.51 / FGSC 9923 / NRRL Y-1056) (Yeast).